The sequence spans 655 residues: p-hydroxybenzoic acid efflux pump subunit AaeB (655 aa).

11 helical membrane passes run 13–33 (FAVK…HFQL), 38–58 (WAVL…GGEP), 69–89 (LRII…ISMI), 93–113 (LLMI…SSLV), 121–141 (WGLS…EPLL), 152–172 (EIVI…PRSI), 370–390 (LFWL…IAVV), 407–427 (FIYG…VIIP), 431–451 (QSML…GIEV), 459–479 (MGAL…TFHF), and 482–502 (FLDS…VILL).

Belongs to the aromatic acid exporter ArAE (TC 2.A.85) family.

The protein resides in the cell inner membrane. Functionally, forms an efflux pump with AaeA. Could function as a metabolic relief valve, allowing to eliminate certain compounds when they accumulate to high levels in the cell. In Salmonella heidelberg (strain SL476), this protein is p-hydroxybenzoic acid efflux pump subunit AaeB.